The following is a 234-amino-acid chain: Endonuclease V (234 aa).

Residues Asp36 and Asp104 each coordinate Mg(2+).

Belongs to the endonuclease V family. Requires Mg(2+) as cofactor.

Its subcellular location is the cytoplasm. The catalysed reaction is Endonucleolytic cleavage at apurinic or apyrimidinic sites to products with a 5'-phosphate.. In terms of biological role, DNA repair enzyme involved in the repair of deaminated bases. Selectively cleaves double-stranded DNA at the second phosphodiester bond 3' to a deoxyinosine leaving behind the intact lesion on the nicked DNA. The protein is Endonuclease V of Yersinia enterocolitica serotype O:8 / biotype 1B (strain NCTC 13174 / 8081).